The sequence spans 403 residues: MEYKSPVRSNLEQTADPNHVLVNMGPSHPATHGTIQIIAALDGERVAKADIHCGYLHRGFEKESEHHTYHKIIPFTDRLNYCSALNNNFAYVEGVEKLLGIELTPRCIYLRTLLAEYNRVADHVTCVAATVMEMGAMTAFLYLMTIRDYIFEHLNQLTGARLTYSFARVGGLKNDLPDGWLERLEEILQFTEKYCGRIHGLLDRNRIFIDRTRDVGAMSPEHALNWGYTGPILRSTGAKIDIRKDNPYLAYADLDFEVPVGIKGDNYDRYYVRMREIDESISMVRQCMKKLPDGPVNIDDRRIMYPTKDKVYTKIEYLISHFKLVIDGIQVPAGEIYVSHEAPNGELGFYLISDGSGRPYKLHVRSPSFAHMGGMHTLLEGYQVADVIATFGSMNMIGGECDR.

Belongs to the complex I 49 kDa subunit family. In terms of assembly, NDH-1 is composed of 14 different subunits. Subunits NuoB, C, D, E, F, and G constitute the peripheral sector of the complex.

The protein localises to the cell inner membrane. The catalysed reaction is a quinone + NADH + 5 H(+)(in) = a quinol + NAD(+) + 4 H(+)(out). Functionally, NDH-1 shuttles electrons from NADH, via FMN and iron-sulfur (Fe-S) centers, to quinones in the respiratory chain. The immediate electron acceptor for the enzyme in this species is believed to be ubiquinone. Couples the redox reaction to proton translocation (for every two electrons transferred, four hydrogen ions are translocated across the cytoplasmic membrane), and thus conserves the redox energy in a proton gradient. This is NADH-quinone oxidoreductase subunit D from Pelobacter propionicus (strain DSM 2379 / NBRC 103807 / OttBd1).